Consider the following 370-residue polypeptide: Fe(2+) transport protein 2 (370 aa).

The N-terminal stretch at 1-25 is a signal peptide; sequence MMMSSSQTPVRIAFVFLVILAATDA. The Extracellular portion of the chain corresponds to 26-55; the sequence is HSDHRTPPPACGGAAVGGECHSVARALRLK. Residues 56-76 form a helical membrane-spanning segment; it reads LIAIPAILAASVAGVCLPLFA. At 77-85 the chain is on the cytoplasmic side; that stretch reads RSVPALRPD. A helical transmembrane segment spans residues 86–106; the sequence is GGLFAVVKAFASGVILGTGYM. The Extracellular portion of the chain corresponds to 107 to 130; that stretch reads HVLPDSFNDLTSPCLPRKPWSEFP. Residues 131-151 traverse the membrane as a helical segment; it reads FAAFVAMLAAVFTLMVDSLML. Residues 152–215 are Cytoplasmic-facing; sequence TFHTRGSKGR…TTKAQLLRNR (64 aa). A helical membrane pass occupies residues 216 to 236; the sequence is VIVQVLEMGIVVHSVVIGLGM. Over 237–247 the chain is Extracellular; that stretch reads GASQNVCTIRP. A helical membrane pass occupies residues 248–268; sequence LVAALCFHQMFEGMGLGGCIL. Residues 269 to 278 are Cytoplasmic-facing; it reads QAGYGGRTRS. The chain crosses the membrane as a helical span at residues 279–299; the sequence is ALVFFFSTTTPFGIALGLALT. The Extracellular portion of the chain corresponds to 300–309; the sequence is RVYSDSSPTA. The chain crosses the membrane as a helical span at residues 310-330; the sequence is LVVVGLLNAASAGLLHYMALV. The Cytoplasmic segment spans residues 331–349; that stretch reads ELLAADFMGPKLQGNVRLQ. The helical transmembrane segment at 350–370 threads the bilayer; that stretch reads LAASLAILLGAGGMSVMAKWA.

It belongs to the ZIP transporter (TC 2.A.5) family.

It is found in the cell membrane. Its function is as follows. Iron transporter that may play a role in the uptake of iron from the rhizosphere across the plasma membrane in the root epidermal layer. The sequence is that of Fe(2+) transport protein 2 (IRT2) from Oryza sativa subsp. japonica (Rice).